Reading from the N-terminus, the 443-residue chain is Trigger factor (443 aa).

The PPIase FKBP-type domain maps to 163-248 (GDTAVIDFEG…INEIKAKELP (86 aa)).

This sequence belongs to the FKBP-type PPIase family. Tig subfamily.

It is found in the cytoplasm. The enzyme catalyses [protein]-peptidylproline (omega=180) = [protein]-peptidylproline (omega=0). Functionally, involved in protein export. Acts as a chaperone by maintaining the newly synthesized protein in an open conformation. Functions as a peptidyl-prolyl cis-trans isomerase. This chain is Trigger factor, found in Agathobacter rectalis (strain ATCC 33656 / DSM 3377 / JCM 17463 / KCTC 5835 / VPI 0990) (Eubacterium rectale).